Reading from the N-terminus, the 466-residue chain is UDP-N-acetylmuramate--L-alanine ligase (466 aa).

117-123 (GTHGKTT) contributes to the ATP binding site.

The protein belongs to the MurCDEF family.

It is found in the cytoplasm. The enzyme catalyses UDP-N-acetyl-alpha-D-muramate + L-alanine + ATP = UDP-N-acetyl-alpha-D-muramoyl-L-alanine + ADP + phosphate + H(+). It functions in the pathway cell wall biogenesis; peptidoglycan biosynthesis. Its function is as follows. Cell wall formation. The protein is UDP-N-acetylmuramate--L-alanine ligase of Streptomyces griseus subsp. griseus (strain JCM 4626 / CBS 651.72 / NBRC 13350 / KCC S-0626 / ISP 5235).